The chain runs to 358 residues: Methylthioribose-1-phosphate isomerase (358 aa).

N-acetylmethionine is present on M1. D248 acts as the Proton donor in catalysis.

It belongs to the eIF-2B alpha/beta/delta subunits family. MtnA subfamily.

It is found in the cytoplasm. The protein localises to the nucleus. The enzyme catalyses 5-(methylsulfanyl)-alpha-D-ribose 1-phosphate = 5-(methylsulfanyl)-D-ribulose 1-phosphate. It participates in amino-acid biosynthesis; L-methionine biosynthesis via salvage pathway; L-methionine from S-methyl-5-thio-alpha-D-ribose 1-phosphate: step 1/6. Functionally, catalyzes the interconversion of methylthioribose-1-phosphate (MTR-1-P) into methylthioribulose-1-phosphate (MTRu-1-P). In Bos taurus (Bovine), this protein is Methylthioribose-1-phosphate isomerase.